Reading from the N-terminus, the 266-residue chain is MHVNGKVALVTGAAQGIGRAFAEALLLKGAKVALVDWNLEAGVKCKAALDEQFEPQKTLFIQCDVADQEQLRDTFRKVVDHFGKLDILVNNAGVNNEKNWEKTLQINLVSVISGTYLGLDYMSKQNGGEGGININMSSLAGLMPVAQQPVYCASKHGIVGFTRSAAMAANLMNSGVRLNAICPGFVDTPILKSIEKEENMGKYIEYMGPIKDMMKYYGILDPSMIANGLITLIEDDALNGAIMKITTSKGIHFQDYDTTPFHMKMQ.

NAD(+)-binding positions include 12–20 (GAAQGIGRA), 36–37 (DW), 63–65 (CDV), and asparagine 91. 2 residues coordinate substrate: serine 138 and glutamine 148. The active-site Proton acceptor is tyrosine 151. Residues 151 to 155 (YCASK) and 186 to 188 (VDT) each bind NAD(+).

This sequence belongs to the short-chain dehydrogenases/reductases (SDR) family. As to quaternary structure, homodimer.

The protein resides in the cytoplasm. The enzyme catalyses prostaglandin E2 + NAD(+) = 15-oxoprostaglandin E2 + NADH + H(+). The catalysed reaction is (15S)-hydroxy-(5Z,8Z,11Z,13E)-eicosatetraenoate + NAD(+) = 15-oxo-(5Z,8Z,11Z,13E)-eicosatetraenoate + NADH + H(+). It catalyses the reaction (11R)-hydroxy-(5Z,8Z,12E,14Z)-eicosatetraenoate + NAD(+) = 11-oxo-(5Z,8Z,12E,14Z)-eicosatetraenoate + NADH + H(+). It carries out the reaction lipoxin A4 + NAD(+) = 15-oxo-(5S,6R)-dihydroxy-(7E,9E,11Z,13E)-eicosatetraenoate + NADH + H(+). The enzyme catalyses 15-oxo-(5S,6R)-dihydroxy-(7E,9E,11Z)-eicosatrienoate + NADH + H(+) = (5S,6R,15S)-trihydroxy-(7E,9E,11Z)-eicosatrienoate + NAD(+). The catalysed reaction is prostaglandin A1 + NAD(+) = 15-oxo-prostaglandin A1 + NADH + H(+). It catalyses the reaction prostaglandin E1 + NAD(+) = 15-oxoprostaglandin E1 + NADH + H(+). It carries out the reaction 14-hydroxy-(4Z,7Z,10Z,12E,16Z,19Z)-docosahexaenoate + NAD(+) = 14-oxo-(4Z,7Z,10Z,12E,16Z,19Z)-docosahexaenoate + NADH + H(+). The enzyme catalyses resolvin E1 + NAD(+) = 18-oxo-resolvin E1 + NADH + H(+). The catalysed reaction is resolvin D1 + NAD(+) = 8-oxoresolvin D1 + NADH + H(+). It catalyses the reaction resolvin D1 + NAD(+) = 17-oxoresolvin D1 + NADH + H(+). It carries out the reaction resolvin D2 + NAD(+) = 7-oxoresolvin D2 + NADH + H(+). The enzyme catalyses resolvin D2 + NAD(+) = 16-oxoresolvin D2 + NADH + H(+). Functionally, catalyzes the NAD-dependent dehydrogenation (oxidation) of a broad array of hydroxylated polyunsaturated fatty acids (mainly eicosanoids and docosanoids, including prostaglandins, lipoxins and resolvins), yielding their corresponding keto (oxo) metabolites. Decreases the levels of the pro-proliferative prostaglandins such as prostaglandin E2 (whose activity is increased in cancer because of an increase in the expression of cyclooxygenase 2) and generates oxo-fatty acid products that can profoundly influence cell function by abrogating pro-inflammatory cytokine expression. Converts resolvins E1, D1 and D2 to their oxo products, which represents a mode of resolvin inactivation. Resolvin E1 plays important roles during the resolution phase of acute inflammation, while resolvins D1 and D2 have a unique role in obesity-induced adipose inflammation. This Bos taurus (Bovine) protein is 15-hydroxyprostaglandin dehydrogenase [NAD(+)] (HPGD).